Reading from the N-terminus, the 236-residue chain is Small ribosomal subunit protein eS6 (236 aa).

Residues Ser-232 and Ser-233 each carry the phosphoserine modification.

This sequence belongs to the eukaryotic ribosomal protein eS6 family. Phosphorylated.

The sequence is that of Small ribosomal subunit protein eS6 (RPS6) from Kluyveromyces lactis (strain ATCC 8585 / CBS 2359 / DSM 70799 / NBRC 1267 / NRRL Y-1140 / WM37) (Yeast).